Reading from the N-terminus, the 490-residue chain is Glutamyl-tRNA(Gln) amidotransferase subunit A (490 aa).

Residues Lys-77 and Ser-152 each act as charge relay system in the active site. The active-site Acyl-ester intermediate is Ser-176.

Belongs to the amidase family. GatA subfamily. As to quaternary structure, heterotrimer of A, B and C subunits.

The enzyme catalyses L-glutamyl-tRNA(Gln) + L-glutamine + ATP + H2O = L-glutaminyl-tRNA(Gln) + L-glutamate + ADP + phosphate + H(+). Allows the formation of correctly charged Gln-tRNA(Gln) through the transamidation of misacylated Glu-tRNA(Gln) in organisms which lack glutaminyl-tRNA synthetase. The reaction takes place in the presence of glutamine and ATP through an activated gamma-phospho-Glu-tRNA(Gln). The sequence is that of Glutamyl-tRNA(Gln) amidotransferase subunit A from Limosilactobacillus reuteri (strain DSM 20016) (Lactobacillus reuteri).